Consider the following 284-residue polypeptide: tRNA dimethylallyltransferase (284 aa).

6 to 13 (GPTASGKS) is a binding site for ATP. 8–13 (TASGKS) provides a ligand contact to substrate. Residues 31–34 (DSLS) form an interaction with substrate tRNA region.

Belongs to the IPP transferase family. In terms of assembly, monomer. Mg(2+) serves as cofactor.

The enzyme catalyses adenosine(37) in tRNA + dimethylallyl diphosphate = N(6)-dimethylallyladenosine(37) in tRNA + diphosphate. Catalyzes the transfer of a dimethylallyl group onto the adenine at position 37 in tRNAs that read codons beginning with uridine, leading to the formation of N6-(dimethylallyl)adenosine (i(6)A). This is tRNA dimethylallyltransferase from Nautilia profundicola (strain ATCC BAA-1463 / DSM 18972 / AmH).